Consider the following 294-residue polypeptide: Formamidopyrimidine-DNA glycosylase (294 aa).

P2 (schiff-base intermediate with DNA) is an active-site residue. E3 (proton donor) is an active-site residue. K61 functions as the Proton donor; for beta-elimination activity in the catalytic mechanism. Residues H104, R123, and K169 each coordinate DNA. Residues 255-289 form an FPG-type zinc finger; sequence AVYGRQDEPCRRCGAPIVREKFMNRSSYSCPRCQP. R279 (proton donor; for delta-elimination activity) is an active-site residue.

It belongs to the FPG family. In terms of assembly, monomer. Requires Zn(2+) as cofactor.

The catalysed reaction is Hydrolysis of DNA containing ring-opened 7-methylguanine residues, releasing 2,6-diamino-4-hydroxy-5-(N-methyl)formamidopyrimidine.. It carries out the reaction 2'-deoxyribonucleotide-(2'-deoxyribose 5'-phosphate)-2'-deoxyribonucleotide-DNA = a 3'-end 2'-deoxyribonucleotide-(2,3-dehydro-2,3-deoxyribose 5'-phosphate)-DNA + a 5'-end 5'-phospho-2'-deoxyribonucleoside-DNA + H(+). Involved in base excision repair of DNA damaged by oxidation or by mutagenic agents. Acts as a DNA glycosylase that recognizes and removes damaged bases. Has a preference for oxidized purines, such as 7,8-dihydro-8-oxoguanine (8-oxoG). Has AP (apurinic/apyrimidinic) lyase activity and introduces nicks in the DNA strand. Cleaves the DNA backbone by beta-delta elimination to generate a single-strand break at the site of the removed base with both 3'- and 5'-phosphates. The chain is Formamidopyrimidine-DNA glycosylase from Nocardia farcinica (strain IFM 10152).